An 875-amino-acid polypeptide reads, in one-letter code: Neurotrypsin (875 aa).

Positions 1-20 are cleaved as a signal peptide; it reads MTLARFVLALVLGALPEVVX. The N-linked (GlcNAc...) asparagine glycan is linked to Asn26. Positions 31–88 are disordered; the sequence is HRPRHSPPTGPHYPYYLPTQQRPPRTRPPPPLPRFPRPPRALPAQRPHALQAGHTPRP. Pro residues predominate over residues 56–71; that stretch reads TRPPPPLPRFPRPPRA. One can recognise a Kringle domain in the interval 93–165; the sequence is CPAGEPWVSV…GKVDWGYCDC (73 aa). 20 disulfides stabilise this stretch: Cys93–Cys165, Cys109–Cys149, Cys138–Cys163, Cys195–Cys259, Cys208–Cys269, Cys239–Cys249, Cys305–Cys369, Cys318–Cys379, Cys349–Cys359, Cys412–Cys475, Cys425–Cys485, Cys455–Cys465, Cys525–Cys589, Cys538–Cys599, Cys569–Cys579, Cys619–Cys750, Cys661–Cys677, Cys765–Cys831, Cys794–Cys808, and Cys821–Cys850. SRCR domains lie at 170–271, 280–381, 387–487, and 500–601; these read IRLR…TCSF, IRLV…SCTP, IRLA…ACYP, and VRLM…ICDY. Positions 619–630 are zymogen activation region; the sequence is CGLRLLHRRQKR. Residues 631-874 enclose the Peptidase S1 domain; the sequence is IIGGKNSLRG…FVPWIKSVTK (244 aa). The Charge relay system role is filled by His676. An N-linked (GlcNAc...) asparagine glycan is attached at Asn683. Asp726 acts as the Charge relay system in catalysis. The active-site Charge relay system is the Ser825.

Belongs to the peptidase S1 family.

The protein resides in the secreted. In terms of biological role, plays a role in neuronal plasticity and the proteolytic action may subserve structural reorganizations associated with learning and memory operations. The protein is Neurotrypsin (PRSS12) of Nomascus leucogenys (Northern white-cheeked gibbon).